The chain runs to 232 residues: uncharacterized protein (232 aa).

Positions Met-1–Asp-46 are disordered. Residues Ser-28–Asp-46 show a composition bias toward basic and acidic residues.

This is an uncharacterized protein from Rhizobium meliloti (Ensifer meliloti).